The primary structure comprises 171 residues: Transcriptional repressor NrdR (171 aa).

A zinc finger spans residues 3–34 (CPFCGDPNTQVADTRENEGGEVVRRRRRCPKC). The 91-residue stretch at 49–139 (PHIVKRNGNR…VYRNFADVDE (91 aa)) folds into the ATP-cone domain. The segment at 148 to 171 (KARPKRNRPAEPPEPTSENDLFRS) is disordered.

This sequence belongs to the NrdR family. The cofactor is Zn(2+).

Functionally, negatively regulates transcription of bacterial ribonucleotide reductase nrd genes and operons by binding to NrdR-boxes. In Aromatoleum aromaticum (strain DSM 19018 / LMG 30748 / EbN1) (Azoarcus sp. (strain EbN1)), this protein is Transcriptional repressor NrdR.